A 326-amino-acid polypeptide reads, in one-letter code: GTPase IMAP family member 5 (326 aa).

Topologically, residues 1 to 297 (MEDHGFEELS…MLCRVTSCLD (297 aa)) are cytoplasmic. The AIG1-type G domain occupies 42-245 (SGLLRILLVG…HSNDLFVYTQ (204 aa)). GTP-binding positions include 51-59 (GKSGCGKSA), Ser-72, 169-171 (HKE), and Asn-206. Residues 298 to 318 (WHIAVSVLLIVLGLTLLITLI) form a helical; Anchor for type IV membrane protein membrane-spanning segment. At 319 to 326 (NMYIGRWK) the chain is on the lumenal side.

Belongs to the TRAFAC class TrmE-Era-EngA-EngB-Septin-like GTPase superfamily. AIG1/Toc34/Toc159-like paraseptin GTPase family. IAN subfamily. Interacts with BAD, BAK1, BAX, BCL2, BCL2L1/Bcl-xL and BCL2L11/BimEL. The interaction with BAX is increased, when cells initiate apoptosis upon IL2 withdrawal. Forms a complex with BCL2L1 or MCL1 and HSPA8/HSC70; the interaction between HSPA8 and BCL2L1 or MCL1 is impaired in the absence of GIMAP5. May interact (via N-terminus) with microtubules. As to expression, primarily expressed in spleen, heart, lung and intestine and, at lower levels, in kidney, stomach and muscle. Expressed in thymus and lymph nodes (at protein level). In the spleen, expressed in periarteriolar lymphatic sheets. Isoform 2: Expressed at higher levels in T lymphocytes compared to isoform 1.

It localises to the lysosome membrane. The protein resides in the endosome. It is found in the multivesicular body membrane. Its subcellular location is the endosome membrane. Required for mitochondrial integrity and T-cell survival. May contribute to T-cell quiescence. In terms of biological role, plays a role in T lymphocyte development and the optimal generation of CD4/CD8 double-positive thymocytes. Inhibitor of GSK3A, possibly by sequestering GSK3A in cytoplasmic vesicles and impairing its translocation to the nucleus. Consequently, impairs GSK3A-dependent transcriptional program and regulation of the DNA damage response occurring during T cells proliferation. Required for the survival of peripheral T cells, natural killer (NK) and NK T-cell development and the maintenance of normal liver function. Promotes the survival of quiescent T-cells. May regulate Ca(2+) homeostasis by modulating lysosomal Ca(2+) stores, preventing its accumulation in the absence of T cell activation. May play a role in mitochondrial DNA segregation in hematopoietic tissues. Is a regulator of liver endothelial cell homeostasis. The sequence is that of GTPase IMAP family member 5 (Gimap5) from Rattus norvegicus (Rat).